An 804-amino-acid polypeptide reads, in one-letter code: Leucine--tRNA ligase (804 aa).

The 'HIGH' region signature appears at 40 to 51 (PYPSGAGLHVGH). A 'KMSKS' region motif is present at residues 576-580 (KMSKS). Lysine 579 lines the ATP pocket.

The protein belongs to the class-I aminoacyl-tRNA synthetase family.

The protein resides in the cytoplasm. The catalysed reaction is tRNA(Leu) + L-leucine + ATP = L-leucyl-tRNA(Leu) + AMP + diphosphate. This is Leucine--tRNA ligase from Staphylococcus aureus (strain Mu3 / ATCC 700698).